A 444-amino-acid chain; its full sequence is Glycerol-3-phosphate transporter (444 aa).

Over 1–36 the chain is Cytoplasmic; sequence MLNIFKPAPHIERLDDSKMDAAYKRLRLQVFIGIFI. Residues 37–57 form a helical membrane-spanning segment; that stretch reads GYAGYYLLRKNFAFAIPYLQE. The Extracellular segment spans residues 58–63; sequence QGFSKT. A helical membrane pass occupies residues 64-84; the sequence is ELGLVLAAVSIAYGFSKFIMG. The Cytoplasmic segment spans residues 85-93; sequence MVSDRCNPR. Residues 94–112 traverse the membrane as a helical segment; the sequence is YFLATGLFLSAIVNILFVS. At 113-120 the chain is on the extracellular side; sequence MPWVTSSV. The helical transmembrane segment at 121–141 threads the bilayer; it reads TIMFIFMFINGWFQGMGWPPC. Residues 142–160 are Cytoplasmic-facing; the sequence is GRTMAHWFSISERGTKMSI. Residues 161–180 traverse the membrane as a helical segment; sequence WNVAHNIGGGILAPLVTLGI. Topologically, residues 181–189 are extracellular; it reads AMFVTWKSV. A helical transmembrane segment spans residues 190-207; the sequence is FFFPAIIAIIISFLIVLL. At 208 to 261 the chain is on the cytoplasmic side; the sequence is VRDTPQSCGLPPIEEYRNDYPKHAFKNQEKELTTKEILFQYVLNNKFLWYIAFA. Residues 262–282 traverse the membrane as a helical segment; sequence NVFVYFVRYGVVDWAPTYLTE. The Extracellular portion of the chain corresponds to 283-287; it reads AKGFS. Residues 288–308 form a helical membrane-spanning segment; sequence PEDSRWSYFLYEYAGIPGTIL. Over 309 to 321 the chain is Cytoplasmic; the sequence is CGWISDRFFKSRR. Residues 322–341 form a helical membrane-spanning segment; the sequence is APAGVLFMAGVFIAVLVYWL. Topologically, residues 342-346 are extracellular; the sequence is NPAGN. A helical transmembrane segment spans residues 347 to 368; the sequence is PLVDNIALISIGFLIYGPVMLI. Residues 369 to 387 are Cytoplasmic-facing; that stretch reads GLQAIDLAPKKAAGTAAGL. A helical membrane pass occupies residues 388–409; sequence TGFFGYIGGSAFANAIMGFVVD. Residues 410–414 are Extracellular-facing; the sequence is RFNWN. Residues 415-435 form a helical membrane-spanning segment; the sequence is GGFIMLISSCILAIVFLALTW. Over 436 to 444 the chain is Cytoplasmic; that stretch reads NTGKRAEHV.

Belongs to the major facilitator superfamily. Organophosphate:Pi antiporter (OPA) (TC 2.A.1.4) family.

The protein resides in the cell membrane. Functionally, responsible for glycerol-3-phosphate uptake. This is Glycerol-3-phosphate transporter (glpT) from Bacillus subtilis (strain 168).